Consider the following 957-residue polypeptide: Dystrophin-related protein 2 (957 aa).

Spectrin repeat units lie at residues 102 to 179 (DHSG…EELE) and 231 to 337 (EHLL…QLQD). Positions 358–383 (WERAISPNKVPYYINHQAQTTCWDHP) constitute a WW domain. The ZZ-type; degenerate zinc finger occupies 605–661 (KHQTKCSICRQCPIKGFRYRSLKQFNVDICQTCFLTGKASKGNKLHYPIMEYYTPTT). Cys-610, Cys-613, Cys-634, and Cys-637 together coordinate Zn(2+). Position 748 is a phosphoserine (Ser-748). Residues 877-894 (PPTESDGNGSAGSSLASS) show a composition bias toward low complexity. Residues 877 to 923 (PPTESDGNGSAGSSLASSPRQSEGSHPREKGQTTPDTEAADDVGSKS) form a disordered region. Thr-910 carries the post-translational modification Phosphothreonine.

In terms of assembly, interacts with PRX; this enhances phosphorylation. Identified in a dystroglycan complex that contains at least PRX, DRP2, UTRN, DMD and DAG1. Detected in trigeminal nerve Schwann cells. Detected in brain cortex and hippocampus. Detected in brain membrane fractions and highly enriched in the postsynaptic density (at protein level).

It is found in the postsynaptic density. It localises to the cell projection. Its subcellular location is the dendrite. The protein localises to the perikaryon. The protein resides in the cell membrane. Its function is as follows. Required for normal myelination and for normal organization of the cytoplasm and the formation of Cajal bands in myelinating Schwann cells. Required for normal PRX location at appositions between the abaxonal surface of the myelin sheath and the Schwann cell plasma membrane. Possibly involved in membrane-cytoskeleton interactions of the central nervous system. The chain is Dystrophin-related protein 2 (Drp2) from Rattus norvegicus (Rat).